We begin with the raw amino-acid sequence, 472 residues long: Argininosuccinate lyase (472 aa).

This sequence belongs to the lyase 1 family. Argininosuccinate lyase subfamily.

It is found in the cytoplasm. The enzyme catalyses 2-(N(omega)-L-arginino)succinate = fumarate + L-arginine. The protein operates within amino-acid biosynthesis; L-arginine biosynthesis; L-arginine from L-ornithine and carbamoyl phosphate: step 3/3. The sequence is that of Argininosuccinate lyase from Syntrophus aciditrophicus (strain SB).